A 34-amino-acid polypeptide reads, in one-letter code: Potassium channel toxin alpha-KTx 6.3 (34 aa).

4 disulfides stabilise this stretch: cysteine 3/cysteine 24, cysteine 9/cysteine 29, cysteine 13/cysteine 31, and cysteine 19/cysteine 34. Cysteine 34 carries the post-translational modification Cysteine amide.

Belongs to the short scorpion toxin superfamily. Potassium channel inhibitor family. Alpha-KTx 06 subfamily. In terms of processing, amidated. The amidated toxin shows 5-fold more affinity for Kv1.3/KCNA3 than the synthetic carboxylated form. Expressed by the venom gland.

It localises to the secreted. In terms of biological role, potently blocks voltage-gated potassium channels Kv1.1/KCNA1 (IC(50)=7-11 nM) and Kv1.3/KCNA3 (IC(50)=11-29 pM). Also mildly blocks intermediate (IK) conductance calcium-activated potassium channels (KCa3.1/KCNN4) and ERG1/Kv11.1/KCNH2. Shows ability to suppress proliferation of lymphocytes, which are known to be sensitive to Kv1.3/KCNA3 homotetrameric channel block. The protein is Potassium channel toxin alpha-KTx 6.3 of Heterometrus spinifer (Asia giant forest scorpion).